The sequence spans 313 residues: Beta-lactamase BRO-1 (313 aa).

Residues 1 to 25 (MQRRHFLQKTLLALPIIFSGNLLTG) form the signal peptide. Residue Cys26 is the site of N-palmitoyl cysteine attachment. The S-diacylglycerol cysteine moiety is linked to residue Cys26. The active-site Acyl-ester intermediate is Ser90. 255-257 (KTG) provides a ligand contact to substrate.

This sequence belongs to the class-A beta-lactamase family.

It localises to the cell membrane. The catalysed reaction is a beta-lactam + H2O = a substituted beta-amino acid. The protein is Beta-lactamase BRO-1 (bla) of Moraxella catarrhalis (Branhamella catarrhalis).